The primary structure comprises 154 residues: Superoxide dismutase [Cu-Zn] (154 aa).

3 residues coordinate Cu cation: H47, H49, and H64. C58 and C147 form a disulfide bridge. The Zn(2+) site is built by H64, H72, H81, and D84. H121 contributes to the Cu cation binding site. The segment covering 124-137 (TDDLGKGENEESKK) has biased composition (basic and acidic residues). A disordered region spans residues 124 to 144 (TDDLGKGENEESKKTGNAGTR). R144 is a substrate binding site.

The protein belongs to the Cu-Zn superoxide dismutase family. As to quaternary structure, homodimer. The cofactor is Cu cation. Zn(2+) is required as a cofactor.

Its subcellular location is the cytoplasm. It catalyses the reaction 2 superoxide + 2 H(+) = H2O2 + O2. In terms of biological role, destroys radicals which are normally produced within the cells and which are toxic to biological systems. The chain is Superoxide dismutase [Cu-Zn] (sod1) from Botryotinia fuckeliana (Noble rot fungus).